A 130-amino-acid polypeptide reads, in one-letter code: MVMTDNIADMLTRIRNANQMHHLQVVVPISKLKVEILKVLKEEGFIKNFFIKEFKREIIISLKYTIERERVIKGLKKISKPGLKVYTSVEKIPKVLSGLGIALISTNKGILTDNKARLEKVGGEVLAYIW.

The protein belongs to the universal ribosomal protein uS8 family. As to quaternary structure, part of the 30S ribosomal subunit. Contacts proteins S5 and S12.

Functionally, one of the primary rRNA binding proteins, it binds directly to 16S rRNA central domain where it helps coordinate assembly of the platform of the 30S subunit. The chain is Small ribosomal subunit protein uS8 from Phytoplasma mali (strain AT).